A 148-amino-acid chain; its full sequence is Caltractin (148 aa).

4 consecutive EF-hand domains span residues Glu-4–Glu-39, Pro-40–Glu-75, Asp-77–Asn-112, and Met-113–Phe-148. Residues Asp-17, Asp-19, Ser-21, Thr-23, Glu-28, Asp-53, Asp-55, Ser-57, Thr-59, and Glu-64 each coordinate Ca(2+). Ca(2+) is bound by residues Asp-126, Asp-128, Asp-130, Glu-132, and Glu-137.

It belongs to the centrin family. Ubiquitous.

Functionally, this calcium-binding protein is found in the basal body complexes (the functional homolog of the centrosome in animal cell). In mitotic cells it is specifically associated with the poles of the mitotic spindles at the sites of the duplicated basal body complexes. This chain is Caltractin, found in Tetraselmis striata (Green microalga).